A 169-amino-acid polypeptide reads, in one-letter code: uncharacterized protein (169 aa).

Residues Asn-13, Asn-29, Asn-39, and Asn-48 are each glycosylated (N-linked (GlcNAc...) asparagine; by host). The Cell attachment site motif lies at 109–111 (RGD). A glycan (N-linked (GlcNAc...) asparagine; by host) is linked at Asn-135. A helical membrane pass occupies residues 145 to 165 (IYHMAIVYILIMYQIYILSLI).

The protein localises to the membrane. This is an uncharacterized protein from Acanthamoeba polyphaga (Amoeba).